Consider the following 539-residue polypeptide: MYGGDDYGNNAEYYDEYAHTGDPQLDMEYERNYYASRMPENVKYFLINFCQAIKEGTLYDIQNMYENTFPQISDHHFDKSAWPDEQEVGPIVDNDKVFLILYKELYYRHIHARIPGGPKLDQRINSFFNYCDFFNLIISSQNPVMLELPDIWLWELVDEFVYQFQNFAQYRARLTDKSQDEIQQLCVNHSNVWSILCILNVLHSLVDISNIKKQLEAISQGADPQTVAGDFGKLSFYKMLGYFSLVGLLRVHSLLGDYYQAIKVLEPIEIHKKSAYSHIPACQISTSYYVGFAYMMMRRYADAIRTFSDILLYIQRTKQLYSTRSYQNDQINKQAEQMYHLLAICLVLHPQCIDESIQQVLREKNYHDAMFKMQCGDLDVFKSFFVFACPRFVSPCPPAADAPMEDYVKDPMEHQLMVFMDEVRQQKDLPTTRSYLKLYTTLPLAKLASFIDPNASDDDVSKLLIRLLCFKHKMRNLVWSKGPSGLEGAFKSGSELDFYIDDDMIHIADTKVSHRYGDFFVRKILKFNDLNRKLKKITI.

Positions 306-514 constitute a PCI domain; the sequence is TFSDILLYIQ…IHIADTKVSH (209 aa).

The protein belongs to the eIF-3 subunit L family. As to quaternary structure, component of the eukaryotic translation initiation factor 3 (eIF-3) complex. The eIF-3 complex interacts with pix.

It is found in the cytoplasm. Functionally, component of the eukaryotic translation initiation factor 3 (eIF-3) complex, which is involved in protein synthesis of a specialized repertoire of mRNAs and, together with other initiation factors, stimulates binding of mRNA and methionyl-tRNAi to the 40S ribosome. The eIF-3 complex specifically targets and initiates translation of a subset of mRNAs involved in cell proliferation. This Drosophila ananassae (Fruit fly) protein is Eukaryotic translation initiation factor 3 subunit L.